A 2258-amino-acid polypeptide reads, in one-letter code: Probable serine/threonine-protein kinase ifkA (2258 aa).

2 disordered regions span residues 43–108 and 189–308; these read RVNS…HQMG and EMNN…KEND. The span at 45 to 57 shows a compositional bias: low complexity; that stretch reads NSSDDINNNNNNN. The span at 58–100 shows a compositional bias: acidic residues; sequence NDDDDDNDDYDDSDDENSDSDYDDYDDSDDENSDDEFYSDDED. Residues 191 to 301 show a composition bias toward low complexity; that stretch reads NNLTNSNNSN…NKELIDNNNN (111 aa). Residues 273–309 adopt a coiled-coil conformation; sequence NNNNNISNNKINKINNNNNNKELIDNNNNNKDKENDL. Positions 319 to 691 constitute a Protein kinase 1 domain; that stretch reads WKKGSCIERK…AGILLKHPFL (373 aa). Residues 325–333 and K348 contribute to the ATP site; that span reads IERKSNYSV. The interval 358 to 398 is disordered; it reads SSSSLTSLSNSNNNNSNNNNNNNNNNNNNNNNNNNNNNNNN. Residues 359–398 show a composition bias toward low complexity; sequence SSSLTSLSNSNNNNSNNNNNNNNNNNNNNNNNNNNNNNNN. The active-site Proton acceptor is D498. Disordered stretches follow at residues 741 to 768 and 782 to 870; these read KSQT…NGSN and PLAT…MTPL. The span at 746-768 shows a compositional bias: low complexity; it reads NNNNDNNNLASSNELLSSSNGSN. Polar residues predominate over residues 782 to 791; that stretch reads PLATSSSLDN. Residues 793–805 are compositionally biased toward pro residues; the sequence is TPPPSRPISPKPS. Low complexity predominate over residues 841–870; that stretch reads PQQNFNTPPTTTTTTTTPTATPTTPTMTPL. Residues 894–1482 form the Protein kinase 2 domain; sequence FEEIEMIGKG…TKQLLESGLL (589 aa). Residues 900 to 908 and K923 contribute to the ATP site; that span reads IGKGGFGVV. Residues 1053–1094 are compositionally biased toward low complexity; sequence TLSSSNTSSSSSLLSNNKSKILNTSKSTSTNTSTSTSTSNTN. The disordered stretch occupies residues 1053–1259; that stretch reads TLSSSNTSSS…SSSRKKPPKE (207 aa). Residues 1095-1106 show a composition bias toward basic residues; sequence KNKKISKKKKSK. Positions 1156-1185 are enriched in low complexity; the sequence is NNNNNNDNNNNYHSDNESDSFSGSISMSDG. Over residues 1206-1233 the composition is skewed to acidic residues; it reads DENENDDDDEEDDDDEYDEEDDDYETFD. The span at 1242-1251 shows a compositional bias: low complexity; sequence SNNSKLSTSS. D1313 serves as the catalytic Proton acceptor. 2 disordered regions span residues 1343 to 1370 and 2048 to 2104; these read KSDD…TAQQ and GSGG…QQTS. Over residues 1347-1368 the composition is skewed to low complexity; the sequence is LNSSTSNTANNINLSSSTNSTA. A compositionally biased stretch (gly residues) spans 2048–2072; it reads GSGGSGGSGGGSSMSSGGGGGGNSN. Positions 2085–2099 are enriched in low complexity; sequence SNQSTSSSGNSNNSN.

The protein belongs to the protein kinase superfamily. Ser/Thr protein kinase family.

It catalyses the reaction L-seryl-[protein] + ATP = O-phospho-L-seryl-[protein] + ADP + H(+). The enzyme catalyses L-threonyl-[protein] + ATP = O-phospho-L-threonyl-[protein] + ADP + H(+). Its function is as follows. Phosphorylates eIF2-alpha, from 1 to 7 hours after the onset of development or during the preaggregation state, resulting in a shift from polysomes to free ribosomes for bulk mRNA. This chain is Probable serine/threonine-protein kinase ifkA (ifkA), found in Dictyostelium discoideum (Social amoeba).